The primary structure comprises 184 residues: MNWQSEWLRVEPIMGSRRISNFCWACITSLGALGFFLVGIPSYLGKDLIPVLPSQQIVFVPQGIVMCFYGIAGLFPSFYLWCTILWNVGSGYNIFDKREGIICLFRWGFPGENRRICIRFSMKDIQAIRVEVREAISPRRVLHMKVKGQQDVPLTRISENLTLREMEEKAAELARFLHVSMEGP.

The next 2 membrane-spanning stretches (helical) occupy residues 22-42 and 64-84; these read FCWA…GIPS and IVMC…WCTI.

This sequence belongs to the Ycf4 family.

It localises to the plastid. Its subcellular location is the chloroplast thylakoid membrane. Its function is as follows. Seems to be required for the assembly of the photosystem I complex. The chain is Photosystem I assembly protein Ycf4 from Huperzia lucidula (Shining clubmoss).